A 260-amino-acid chain; its full sequence is Glucosamine-6-phosphate deaminase (260 aa).

The active-site Proton acceptor; for enolization step is Asp-67. Residue Asp-136 is the For ring-opening step of the active site. His-138 functions as the Proton acceptor; for ring-opening step in the catalytic mechanism. Glu-143 functions as the For ring-opening step in the catalytic mechanism.

Belongs to the glucosamine/galactosamine-6-phosphate isomerase family. NagB subfamily.

It catalyses the reaction alpha-D-glucosamine 6-phosphate + H2O = beta-D-fructose 6-phosphate + NH4(+). It participates in amino-sugar metabolism; N-acetylneuraminate degradation; D-fructose 6-phosphate from N-acetylneuraminate: step 5/5. Functionally, catalyzes the reversible isomerization-deamination of glucosamine 6-phosphate (GlcN6P) to form fructose 6-phosphate (Fru6P) and ammonium ion. The sequence is that of Glucosamine-6-phosphate deaminase from Arthrobacter sp. (strain FB24).